Consider the following 94-residue polypeptide: Host-modulation protein 11K (94 aa).

As to quaternary structure, interacts with host GRB2; this interaction alters host cell environment by modulating host signaling pathways.

The protein localises to the host cytoplasm. In terms of biological role, enhances viral DNA replication and virion release. Mechansitically, optimizes viral DNA replication by interacting with host GRB2 to inhibit the negative effect of ERK signaling on B19 viral replication. Plays a role in viral infectivity. Induces apoptosis of primary erythroid progenitor cells. The chain is Host-modulation protein 11K (11K) from Human parvovirus B19 (strain HV) (HPV B19).